The chain runs to 458 residues: Argininosuccinate lyase (458 aa).

It belongs to the lyase 1 family. Argininosuccinate lyase subfamily.

It is found in the cytoplasm. The catalysed reaction is 2-(N(omega)-L-arginino)succinate = fumarate + L-arginine. Its pathway is amino-acid biosynthesis; L-arginine biosynthesis; L-arginine from L-ornithine and carbamoyl phosphate: step 3/3. This chain is Argininosuccinate lyase, found in Neisseria meningitidis serogroup C / serotype 2a (strain ATCC 700532 / DSM 15464 / FAM18).